Reading from the N-terminus, the 271-residue chain is Orotidine 5'-phosphate decarboxylase (271 aa).

Lys95 serves as the catalytic Proton donor.

The protein belongs to the OMP decarboxylase family. Type 2 subfamily.

The catalysed reaction is orotidine 5'-phosphate + H(+) = UMP + CO2. It participates in pyrimidine metabolism; UMP biosynthesis via de novo pathway; UMP from orotate: step 2/2. This is Orotidine 5'-phosphate decarboxylase from Janthinobacterium sp. (strain Marseille) (Minibacterium massiliensis).